Consider the following 337-residue polypeptide: Neurogenic differentiation factor 6 (337 aa).

The interval 43-82 (LRGKSIKRAPGEETEKEEEEEDREEEDENGLPRRRGLRKK) is disordered. Acidic residues predominate over residues 54–71 (EETEKEEEEEDREEEDEN). The Nuclear localization signal signature appears at 80-86 (RKKKTTK). The 53-residue stretch at 94–146 (FRRQEANARERNRMHGLNDALDNLRKVVPCYSKTQKLSKIETLRLAKNYIWAL) folds into the bHLH domain.

Efficient DNA binding requires dimerization with another bHLH protein.

The protein resides in the nucleus. Functionally, activates E box-dependent transcription in collaboration with TCF3/E47. May be a trans-acting factor involved in the development and maintenance of the mammalian nervous system. Transactivates the promoter of its own gene. The sequence is that of Neurogenic differentiation factor 6 (NEUROD6) from Bos taurus (Bovine).